The chain runs to 182 residues: NAD(P)H-quinone oxidoreductase subunit I, chloroplastic (182 aa).

2 4Fe-4S ferredoxin-type domains span residues 55 to 84 and 95 to 124; these read GRIHFEFDKCIACEVCVRVCPIDLPVVDWK and LNYSIDFGICIFCGNCVEYCPTNCLSMTEE. Cys64, Cys67, Cys70, Cys74, Cys104, Cys107, Cys110, and Cys114 together coordinate [4Fe-4S] cluster.

It belongs to the complex I 23 kDa subunit family. In terms of assembly, NDH is composed of at least 16 different subunits, 5 of which are encoded in the nucleus. [4Fe-4S] cluster serves as cofactor.

The protein localises to the plastid. It is found in the chloroplast thylakoid membrane. It catalyses the reaction a plastoquinone + NADH + (n+1) H(+)(in) = a plastoquinol + NAD(+) + n H(+)(out). It carries out the reaction a plastoquinone + NADPH + (n+1) H(+)(in) = a plastoquinol + NADP(+) + n H(+)(out). NDH shuttles electrons from NAD(P)H:plastoquinone, via FMN and iron-sulfur (Fe-S) centers, to quinones in the photosynthetic chain and possibly in a chloroplast respiratory chain. The immediate electron acceptor for the enzyme in this species is believed to be plastoquinone. Couples the redox reaction to proton translocation, and thus conserves the redox energy in a proton gradient. The protein is NAD(P)H-quinone oxidoreductase subunit I, chloroplastic of Buxus microphylla (Littleleaf boxwood).